The chain runs to 365 residues: Fructose-1,6-bisphosphatase class 1 2 (365 aa).

Residues Glu100, Asp122, Leu124, and Asp125 each coordinate Mg(2+). Residues 125-128 and Asn221 contribute to the substrate site; that span reads DGSS. Residue Glu293 participates in Mg(2+) binding.

The protein belongs to the FBPase class 1 family. Homotetramer. It depends on Mg(2+) as a cofactor.

Its subcellular location is the cytoplasm. It carries out the reaction beta-D-fructose 1,6-bisphosphate + H2O = beta-D-fructose 6-phosphate + phosphate. It functions in the pathway carbohydrate biosynthesis; gluconeogenesis. This chain is Fructose-1,6-bisphosphatase class 1 2, found in Cupriavidus metallidurans (strain ATCC 43123 / DSM 2839 / NBRC 102507 / CH34) (Ralstonia metallidurans).